The following is a 434-amino-acid chain: Serine--tRNA ligase (434 aa).

Residue 239–241 (TAE) coordinates L-serine. 270–272 (RSE) lines the ATP pocket. Glu-293 is an L-serine binding site. Residue 357–360 (EISS) coordinates ATP. Ser-392 provides a ligand contact to L-serine.

Belongs to the class-II aminoacyl-tRNA synthetase family. Type-1 seryl-tRNA synthetase subfamily. Homodimer. The tRNA molecule binds across the dimer.

It is found in the cytoplasm. It carries out the reaction tRNA(Ser) + L-serine + ATP = L-seryl-tRNA(Ser) + AMP + diphosphate + H(+). The enzyme catalyses tRNA(Sec) + L-serine + ATP = L-seryl-tRNA(Sec) + AMP + diphosphate + H(+). It functions in the pathway aminoacyl-tRNA biosynthesis; selenocysteinyl-tRNA(Sec) biosynthesis; L-seryl-tRNA(Sec) from L-serine and tRNA(Sec): step 1/1. Its function is as follows. Catalyzes the attachment of serine to tRNA(Ser). Is also able to aminoacylate tRNA(Sec) with serine, to form the misacylated tRNA L-seryl-tRNA(Sec), which will be further converted into selenocysteinyl-tRNA(Sec). The chain is Serine--tRNA ligase from Cupriavidus necator (strain ATCC 17699 / DSM 428 / KCTC 22496 / NCIMB 10442 / H16 / Stanier 337) (Ralstonia eutropha).